A 255-amino-acid chain; its full sequence is 5'-nucleotidase SurE (255 aa).

A divalent metal cation-binding residues include aspartate 8, aspartate 9, serine 39, and asparagine 95.

Belongs to the SurE nucleotidase family. Requires a divalent metal cation as cofactor.

The protein resides in the cytoplasm. It catalyses the reaction a ribonucleoside 5'-phosphate + H2O = a ribonucleoside + phosphate. Nucleotidase that shows phosphatase activity on nucleoside 5'-monophosphates. The polypeptide is 5'-nucleotidase SurE (Thermosipho melanesiensis (strain DSM 12029 / CIP 104789 / BI429)).